The primary structure comprises 398 residues: Fatty-acid-binding protein 2 (398 aa).

Arg-222, Tyr-235, and Ser-302 together coordinate dodecanoate.

Belongs to the chalcone isomerase family. As to expression, expressed in developing cotyledons, young seedlings, roots, seeds, embryos, macrospores, preanthesis and tapetum. Restricted to developing and reproductive tissues.

Its subcellular location is the plastid. It is found in the chloroplast stroma. Functionally, fatty-acid-binding protein. Associates with saturated fatty acid. The protein is Fatty-acid-binding protein 2 (FAP2) of Arabidopsis thaliana (Mouse-ear cress).